The primary structure comprises 910 residues: Anoctamin-6 (910 aa).

Residues 1–300 lie on the Cytoplasmic side of the membrane; the sequence is MKKMSRNVLL…YGEKIGIYFA (300 aa). A helical transmembrane segment spans residues 301–321; sequence WLGYYTQMLLLAAVVGVACFL. At 322–375 the chain is on the extracellular side; it reads YGYLNQDNCTWSKEVCHPDIGGKIIMCPQCDRLCPFWKLNITCESSKKLCIFDS. An N-linked (GlcNAc...) asparagine glycan is attached at N329. 5 disulfide bridges follow: C330–C371, C337–C364, C348–C806, C351–C355, and C595–C600. A glycan (N-linked (GlcNAc...) asparagine) is linked at N361. The helical transmembrane segment at 376–396 threads the bilayer; sequence FGTLVFAVFMGVWVTLFLEFW. Topologically, residues 397-455 are cytoplasmic; that stretch reads KRRQAELEYEWDTVELQQEEQARPEYEARCTHVVINEITQEEERIPFTAWGKCIRITLC. Residues 456-476 traverse the membrane as a helical segment; sequence ASAVFFWILLIIASVIGIIVY. Residues 477–509 are Extracellular-facing; that stretch reads RLSVFIVFSAKLPKNINGTDPIQKYLTPQTATS. An N-linked (GlcNAc...) asparagine glycan is attached at N493. A helical transmembrane segment spans residues 510-530; sequence ITASIISFIIIMILNTIYEKV. The Cytoplasmic portion of the chain corresponds to 531-551; the sequence is AIMITNFELPRTQTDYENSLT. A helical transmembrane segment spans residues 552-572; sequence MKMFLFQFVNYYSSCFYIAFF. The Extracellular portion of the chain corresponds to 573 to 601; that stretch reads KGKFVGYPGDPVYWLGKYRNEECDPGGCL. Residues 602–621 traverse the membrane as a helical segment; the sequence is LELTTQLTIIMGGKAIWNNI. Over 622-663 the chain is Cytoplasmic; the sequence is QEVLLPWIMNLIGRFHRVSGSEKITPRWEQDYHLQPMGKLGL. Ca(2+) contacts are provided by E623, E666, and E669. Transmembrane regions (helical) follow at residues 664 to 684 and 685 to 705; these read FYEY…VASF and PLAP…DAWK. Topologically, residues 706-722 are cytoplasmic; the sequence is LTTQFRRLVPEKAQDIG. The helical transmembrane segment at 723-743 threads the bilayer; it reads AWQPIMQGIAILAVVTNAMII. The Extracellular segment spans residues 744–836; sequence AFTSDMIPRL…YWHVIAAKLA (93 aa). N777, N790, and N802 each carry an N-linked (GlcNAc...) asparagine glycan. A helical transmembrane segment spans residues 837–857; sequence FIIVMEHVIYSVKFFISYAIP. The Cytoplasmic portion of the chain corresponds to 858–910; sequence DVSKRTKSKIQREKYLTQKLLHENHLKDMTKNMGVIAERMIEAVDNNLRPKSE.

Belongs to the anoctamin family. Homodimer. As to expression, expressed in embryonic stem cell, fetal liver, retina, chronic myologenous leukemia and intestinal cancer.

It is found in the cell membrane. It carries out the reaction a 1,2-diacyl-sn-glycero-3-phospho-L-serine(in) = a 1,2-diacyl-sn-glycero-3-phospho-L-serine(out). The catalysed reaction is a beta-D-galactosyl-(1&lt;-&gt;1')-N-acylsphing-4-enine(out) = a beta-D-galactosyl-(1&lt;-&gt;1')-N-acylsphing-4-enine(in). The enzyme catalyses a 1,2-diacyl-sn-glycero-3-phosphocholine(in) = a 1,2-diacyl-sn-glycero-3-phosphocholine(out). With respect to regulation, exhibits synergistic gating by Ca(2+) and voltage. Inhibited by some non-specific cation channel blockers such as: ruthenium red, 2-aminoethyl diphenylborinate (2APB), gadolinium and cadmium ions. Its activity is regulated as follows. (Microbial infection) Activated by SARS coronavirus-2/SARS-CoV-2 spike protein. Its function is as follows. Small-conductance calcium-activated nonselective cation (SCAN) channel which acts as a regulator of phospholipid scrambling in platelets and osteoblasts. Phospholipid scrambling results in surface exposure of phosphatidylserine which in platelets is essential to trigger the clotting system whereas in osteoblasts is essential for the deposition of hydroxyapatite during bone mineralization. Has calcium-dependent phospholipid scramblase activity; scrambles phosphatidylserine, phosphatidylcholine and galactosylceramide. Can generate outwardly rectifying chloride channel currents in airway epithelial cells and Jurkat T lymphocytes. In terms of biological role, (Microbial infection) Upon SARS coronavirus-2/SARS-CoV-2 infection, is activated by spike protein which increases the amplitude of spontaneous Ca(2+) signals and is required for spike-mediated syncytia. This Homo sapiens (Human) protein is Anoctamin-6.